The primary structure comprises 288 residues: DegV domain-containing protein SAS0714 (288 aa).

Positions Ile-3–Gly-282 constitute a DegV domain. Residues Thr-62 and Ser-95 each contribute to the hexadecanoate site.

Functionally, may bind long-chain fatty acids, such as palmitate, and may play a role in lipid transport or fatty acid metabolism. In Staphylococcus aureus (strain MSSA476), this protein is DegV domain-containing protein SAS0714.